A 230-amino-acid chain; its full sequence is V-type proton ATPase subunit E (230 aa).

This sequence belongs to the V-ATPase E subunit family. As to quaternary structure, V-ATPase is a heteromultimeric enzyme composed of a peripheral catalytic V1 complex (components A to H) attached to an integral membrane V0 proton pore complex (components: a, c, c', c'' and d).

Subunit of the peripheral V1 complex of vacuolar ATPase essential for assembly or catalytic function. V-ATPase is responsible for acidifying a variety of intracellular compartments in eukaryotic cells. This is V-type proton ATPase subunit E (VATE) from Citrus limon (Lemon).